Reading from the N-terminus, the 342-residue chain is L-threonine 3-dehydrogenase (342 aa).

Cysteine 38 serves as a coordination point for Zn(2+). Catalysis depends on charge relay system residues threonine 40 and histidine 43. Residues histidine 63, glutamate 64, cysteine 93, cysteine 96, cysteine 99, and cysteine 107 each contribute to the Zn(2+) site. NAD(+) is bound by residues isoleucine 175, aspartate 195, arginine 200, 262-264 (LGI), and 286-287 (IY).

Belongs to the zinc-containing alcohol dehydrogenase family. As to quaternary structure, homotetramer. Zn(2+) is required as a cofactor.

It localises to the cytoplasm. The enzyme catalyses L-threonine + NAD(+) = (2S)-2-amino-3-oxobutanoate + NADH + H(+). Its pathway is amino-acid degradation; L-threonine degradation via oxydo-reductase pathway; glycine from L-threonine: step 1/2. In terms of biological role, catalyzes the NAD(+)-dependent oxidation of L-threonine to 2-amino-3-ketobutyrate. In Burkholderia vietnamiensis (strain G4 / LMG 22486) (Burkholderia cepacia (strain R1808)), this protein is L-threonine 3-dehydrogenase.